A 162-amino-acid chain; its full sequence is Caveolin-2 (162 aa).

The Cytoplasmic segment spans residues 1–86; the sequence is MGLETEKADV…FEISKYVMYK (86 aa). At Y19 the chain carries Phosphotyrosine; by SRC. The residue at position 20 (S20) is a Phosphoserine. Position 27 is a phosphotyrosine; by SRC (Y27). S36 is modified (phosphoserine). Positions 87 to 107 form an intramembrane region, helical; that stretch reads FLTVFLAIPLAFAAGILFATL. Residues 108–162 lie on the Cytoplasmic side of the membrane; it reads SCLHIWIIMPFVKTCLMVLPSVQTIWKSVTDVIIAPLCTSVGRSLSSISLQLSHD.

Belongs to the caveolin family. In terms of assembly, monomer or homodimer. Interacts with CAV1; the interaction forms a stable heterooligomeric complex that is required for targeting to lipid rafts and for caveolae formation. Tyrosine phosphorylated forms do not form heterooligomers with the Tyr-19-phosphorylated form existing as a monomer or dimer, and the Tyr-27-form as a monomer only. Interacts (tyrosine phosphorylated form) with the SH2 domain-containing proteins, RASA1, NCK1 and SRC. Interacts (tyrosine phosphorylated form) with INSR, the interaction (Tyr-27-phosphorylated form) is increased on insulin stimulation. Interacts (Tyr-19 phosphorylated form) with MAPK1 (phosphorylated form); the interaction, promoted by insulin, leads to nuclear location and MAPK1 activation. Interacts with STAT3; the interaction is increased on insulin-induced tyrosine phosphorylation leading to STAT activation. Phosphorylated on serine and tyrosine residues. Phosphorylation on Ser-36 appears to modulate mitosis in endothelial cells. Phosphorylation on both Tyr-19 and Tyr-27 is required for insulin-induced 'Ser-727' phosphorylation of STAT3 and its activation. Phosphorylation on Tyr-19 is required for insulin-induced phosphorylation of MAPK1 and DNA binding of STAT3. Tyrosine phosphorylation is induced by both EGF and insulin.

Its subcellular location is the nucleus. It localises to the cytoplasm. It is found in the golgi apparatus membrane. The protein resides in the cell membrane. The protein localises to the membrane. Its subcellular location is the caveola. Its function is as follows. May act as a scaffolding protein within caveolar membranes. Interacts directly with G-protein alpha subunits and can functionally regulate their activity. Acts as an accessory protein in conjunction with CAV1 in targeting to lipid rafts and driving caveolae formation. The Ser-36 phosphorylated form has a role in modulating mitosis in endothelial cells. Positive regulator of cellular mitogenesis of the MAPK signaling pathway. Required for the insulin-stimulated nuclear translocation and activation of MAPK1 and STAT3, and the subsequent regulation of cell cycle progression. The sequence is that of Caveolin-2 (CAV2) from Eulemur macaco macaco (Black lemur).